Here is a 184-residue protein sequence, read N- to C-terminus: Myeloproliferative leukemia protein (184 aa).

The WSXWS motif signature appears at 26 to 30 (WSAWS). A helical membrane pass occupies residues 44 to 64 (ITLVTALLLVLSLSALLGLLL). Positions 80–88 (LWPSLPDLH) match the Box 1 motif motif.

This sequence belongs to the type I cytokine receptor family. Type 1 subfamily.

Its subcellular location is the membrane. Functionally, truncated form of the receptor for thrombopoietin. The chain is Myeloproliferative leukemia protein (V-MPL) from Mus musculus (Mouse).